Consider the following 349-residue polypeptide: Flap endonuclease 1 (349 aa).

An N-domain region spans residues 1 to 102; that stretch reads MGVTELGKLI…AEIEARRRVK (102 aa). Residues Asp-31, Asp-84, Glu-156, Glu-158, Asp-177, Asp-179, and Asp-239 each coordinate Mg(2+). Residues 120–261 form an I-domain region; that stretch reads DVAKYMKRVI…KALKLVLEFG (142 aa).

Belongs to the XPG/RAD2 endonuclease family. FEN1 subfamily. In terms of assembly, interacts with PCNA. PCNA stimulates the nuclease activity without altering cleavage specificity. Mg(2+) serves as cofactor.

Functionally, structure-specific nuclease with 5'-flap endonuclease and 5'-3' exonuclease activities involved in DNA replication and repair. During DNA replication, cleaves the 5'-overhanging flap structure that is generated by displacement synthesis when DNA polymerase encounters the 5'-end of a downstream Okazaki fragment. Binds the unpaired 3'-DNA end and kinks the DNA to facilitate 5' cleavage specificity. Cleaves one nucleotide into the double-stranded DNA from the junction in flap DNA, leaving a nick for ligation. Also involved in the base excision repair (BER) pathway. Acts as a genome stabilization factor that prevents flaps from equilibrating into structures that lead to duplications and deletions. Also possesses 5'-3' exonuclease activity on nicked or gapped double-stranded DNA. This chain is Flap endonuclease 1, found in Pyrobaculum neutrophilum (strain DSM 2338 / JCM 9278 / NBRC 100436 / V24Sta) (Thermoproteus neutrophilus).